Consider the following 81-residue polypeptide: Cytotoxin 3 (81 aa).

The signal sequence occupies residues 1-21 (MKTLLLTLVVVTIVCLDLGYT). Cystine bridges form between cysteine 24-cysteine 42, cysteine 35-cysteine 59, cysteine 63-cysteine 74, and cysteine 75-cysteine 80.

This sequence belongs to the three-finger toxin family. Short-chain subfamily. Type IA cytotoxin sub-subfamily. Monomer in solution; Homodimer and oligomer in the presence of negatively charged lipids forming a pore with a size ranging between 20 and 30 Angstroms. Interacts with Kv channel-interacting protein 1 (KCNIP1) in a calcium-independent manner. In terms of tissue distribution, expressed by the venom gland.

It is found in the secreted. It localises to the target cell membrane. Functionally, basic protein that binds to cell membrane and depolarizes cardiomyocytes. This cytotoxin also possesses lytic activity on many other cells, including red blood cells. Interaction with sulfatides in the cell membrane induces pore formation and cell internalization. Cytotoxicity is due to pore formation, and to another mechanism independent of membrane-damaging activity. When internalized, it targets the mitochondrial membrane and induces mitochondrial swelling and fragmentation. It inhibits protein kinases C. It binds to the integrin alpha-V/beta-3 (ITGAV/ITGB3) with a moderate affinity. It also binds with high affinity to heparin. This is Cytotoxin 3 from Naja atra (Chinese cobra).